The chain runs to 315 residues: Probable cytochrome c oxidase subunit 2 (315 aa).

Transmembrane regions (helical) follow at residues 54–74 (IALICFLIVSCNCFASEPLPW), 96–116 (LLYISTAIVLFVAGLLGFVCI), and 133–153 (VLIEIIWTVIPIIILVIIAVP). 4 residues coordinate Cu cation: His235, Cys270, Cys274, and His278.

The protein belongs to the cytochrome c oxidase subunit 2 family. It depends on Cu cation as a cofactor. Heme is required as a cofactor.

It is found in the cell membrane. It catalyses the reaction 4 Fe(II)-[cytochrome c] + O2 + 8 H(+)(in) = 4 Fe(III)-[cytochrome c] + 2 H2O + 4 H(+)(out). Its function is as follows. Subunits I and II form the functional core of the enzyme complex. Electrons originating in cytochrome c are transferred via heme a and Cu(A) to the binuclear center formed by heme a3 and Cu(B). The polypeptide is Probable cytochrome c oxidase subunit 2 (ctaC) (Rickettsia conorii (strain ATCC VR-613 / Malish 7)).